Reading from the N-terminus, the 958-residue chain is Glycine dehydrogenase (decarboxylating) (958 aa).

The residue at position 705 (Lys705) is an N6-(pyridoxal phosphate)lysine.

Belongs to the GcvP family. In terms of assembly, the glycine cleavage system is composed of four proteins: P, T, L and H. Requires pyridoxal 5'-phosphate as cofactor.

The catalysed reaction is N(6)-[(R)-lipoyl]-L-lysyl-[glycine-cleavage complex H protein] + glycine + H(+) = N(6)-[(R)-S(8)-aminomethyldihydrolipoyl]-L-lysyl-[glycine-cleavage complex H protein] + CO2. Functionally, the glycine cleavage system catalyzes the degradation of glycine. The P protein binds the alpha-amino group of glycine through its pyridoxal phosphate cofactor; CO(2) is released and the remaining methylamine moiety is then transferred to the lipoamide cofactor of the H protein. The polypeptide is Glycine dehydrogenase (decarboxylating) (Bdellovibrio bacteriovorus (strain ATCC 15356 / DSM 50701 / NCIMB 9529 / HD100)).